Consider the following 34-residue polypeptide: Corticostatin-6 (34 aa).

3 cysteine pairs are disulfide-bonded: Cys3–Cys31, Cys5–Cys20, and Cys10–Cys30.

This sequence belongs to the alpha-defensin family. Lung, spleen, small intestine, pituitary gland, adrenal medulla and plasma.

The protein localises to the secreted. Functionally, microbicidal activity and inhibits corticotropin (ACTH) stimulated corticosterone production. This chain is Corticostatin-6, found in Oryctolagus cuniculus (Rabbit).